Here is a 369-residue protein sequence, read N- to C-terminus: MCTQDETIFVLHDQQSNNSAAQSFTNFIFGDSLVDVGNNNYIFTLSKADSSPYGIDFAPSNGQPTGRFTNGRTISDIVGEALGAKSPPPPYLEPNTEANTIRNGINYASGAAGILDDTGLLFIGRVPLREQVSNFEKSREYMVRVIGENGTKEMLKNAMFTITIGSNDILNYIQPSIPFFSQDKLPTDVLQDSMVLHLTTHLKRLHQLGGRKFVVVGVGPLGCIPFARALNLIPAGKCSEQVNQVVRGYNMKLIHSLKTLNNELRSEDYNTTFVYANSYDLFLKLVLNYQLFGLKNADKPCCGGYFPPFACFKGPNQNSSQAACEDRSKFVFWDAYHPTEAANLIVAKALLDGDQTVATPFNIRYLNDL.

The active-site Nucleophile is serine 32. Catalysis depends on residues aspartate 334 and histidine 337.

It belongs to the 'GDSL' lipolytic enzyme family.

This Arabidopsis thaliana (Mouse-ear cress) protein is GDSL esterase/lipase At5g41890.